A 286-amino-acid polypeptide reads, in one-letter code: 4-hydroxybenzoate octaprenyltransferase (286 aa).

9 helical membrane passes run 19–39, 42–62, 92–112, 115–135, 137–157, 161–181, 206–226, 233–253, and 264–284; these read AGWLLLLWPTLSALWVASHGF, WHLLTVFTLGTILMRSAGCCV, ALVLGAVLALLAFGLVLTTNA, IAWSFAALAVTLAYPFAKRYV, MPQAVLGVAFSFGIPMAFAAV, VPLLAWVLLLGNLCWVIAYDT, FDVAGVMLSYLVYLSVWALAL, AIYWMAIGLAGLQALWHGWLI, and AFRLNHWLGFTVFAGIALSYL.

This sequence belongs to the UbiA prenyltransferase family. Mg(2+) is required as a cofactor.

It is found in the cell inner membrane. The catalysed reaction is all-trans-octaprenyl diphosphate + 4-hydroxybenzoate = 4-hydroxy-3-(all-trans-octaprenyl)benzoate + diphosphate. Its pathway is cofactor biosynthesis; ubiquinone biosynthesis. In terms of biological role, catalyzes the prenylation of para-hydroxybenzoate (PHB) with an all-trans polyprenyl group. Mediates the second step in the final reaction sequence of ubiquinone-8 (UQ-8) biosynthesis, which is the condensation of the polyisoprenoid side chain with PHB, generating the first membrane-bound Q intermediate 3-octaprenyl-4-hydroxybenzoate. In Polaromonas sp. (strain JS666 / ATCC BAA-500), this protein is 4-hydroxybenzoate octaprenyltransferase.